We begin with the raw amino-acid sequence, 131 residues long: Global transcriptional regulator Spx 1 (131 aa).

Cysteine 10 and cysteine 13 are oxidised to a cystine.

This sequence belongs to the ArsC family. Spx subfamily. As to quaternary structure, interacts with the C-terminal domain of the alpha subunit of the RNAP.

It is found in the cytoplasm. In terms of biological role, global transcriptional regulator that plays a key role in stress response and exerts either positive or negative regulation of genes. Acts by interacting with the C-terminal domain of the alpha subunit of the RNA polymerase (RNAP). This interaction can enhance binding of RNAP to the promoter region of target genes and stimulate their transcription, or block interaction of RNAP with activator. This chain is Global transcriptional regulator Spx 1, found in Bacillus anthracis.